The sequence spans 802 residues: Oligophrenin-1 (802 aa).

Residues Gln-265 to Pro-368 enclose the PH domain. The 185-residue stretch at Met-380 to Tyr-564 folds into the Rho-GAP domain. Disordered stretches follow at residues Ser-606–Cys-665 and Gly-681–Ser-802. The span at Gln-617–Leu-627 shows a compositional bias: polar residues. The span at His-716–Gly-732 shows a compositional bias: basic and acidic residues.

Interacts with HOMER1. Interacts with AMPA receptor complexes. Interacts with SH3GL2 (endophilin-A1). Interacts (via C-terminus) with NR1D1.

It is found in the postsynapse. The protein localises to the presynapse. The protein resides in the cell projection. Its subcellular location is the axon. It localises to the dendritic spine. It is found in the dendrite. The protein localises to the cytoplasm. Stimulates GTP hydrolysis of members of the Rho family. Its action on RHOA activity and signaling is implicated in growth and stabilization of dendritic spines, and therefore in synaptic function. Critical for the stabilization of AMPA receptors at postsynaptic sites. Critical for the regulation of synaptic vesicle endocytosis at presynaptic terminals. Required for the localization of NR1D1 to dendrites, can suppress its repressor activity and protect it from proteasomal degradation. The chain is Oligophrenin-1 (Ophn1) from Mus musculus (Mouse).